A 599-amino-acid chain; its full sequence is Tail knob protein gp9 (599 aa).

This sequence belongs to the picovirinae distal tube protein family. Homohexamer; forms a hexameric tube structure with six flexible hydrophobic loops.

It localises to the virion. In terms of biological role, distal (knob) tail protein that plugs the end of the tube before DNA ejection and forms a channel perforating the host membrane during ejection. The chain is Tail knob protein gp9 (9) from Bacillus phage PZA (Bacteriophage PZA).